Here is an 85-residue protein sequence, read N- to C-terminus: Large ribosomal subunit protein bL27 (85 aa).

The interval 1 to 22 (MAHKKAGGSTRNGRDSESKRLG) is disordered.

The protein belongs to the bacterial ribosomal protein bL27 family.

This is Large ribosomal subunit protein bL27 from Vibrio vulnificus (strain CMCP6).